A 456-amino-acid chain; its full sequence is tRNA modification GTPase MnmE (456 aa).

3 residues coordinate (6S)-5-formyl-5,6,7,8-tetrahydrofolate: Arg25, Glu87, and Arg126. The region spanning 221 to 377 (GLKVAIVGQP…LENAIIEQVN (157 aa)) is the TrmE-type G domain. Asn231 is a K(+) binding site. GTP is bound by residues 231–236 (NVGKSS), 250–256 (TDLPGTT), and 275–278 (DTAG). Residue Ser235 coordinates Mg(2+). Residues Thr250, Leu252, and Thr255 each contribute to the K(+) site. Thr256 is a Mg(2+) binding site. Lys456 contacts (6S)-5-formyl-5,6,7,8-tetrahydrofolate.

The protein belongs to the TRAFAC class TrmE-Era-EngA-EngB-Septin-like GTPase superfamily. TrmE GTPase family. Homodimer. Heterotetramer of two MnmE and two MnmG subunits. It depends on K(+) as a cofactor.

Its subcellular location is the cytoplasm. In terms of biological role, exhibits a very high intrinsic GTPase hydrolysis rate. Involved in the addition of a carboxymethylaminomethyl (cmnm) group at the wobble position (U34) of certain tRNAs, forming tRNA-cmnm(5)s(2)U34. The sequence is that of tRNA modification GTPase MnmE from Synechocystis sp. (strain ATCC 27184 / PCC 6803 / Kazusa).